The primary structure comprises 193 residues: Molybdenum cofactor guanylyltransferase (193 aa).

GTP-binding positions include 8–10 (LAG), Lys21, Asp67, and Asp98. Asp98 lines the Mg(2+) pocket.

It belongs to the MobA family. In terms of assembly, monomer. It depends on Mg(2+) as a cofactor.

It is found in the cytoplasm. The catalysed reaction is Mo-molybdopterin + GTP + H(+) = Mo-molybdopterin guanine dinucleotide + diphosphate. Transfers a GMP moiety from GTP to Mo-molybdopterin (Mo-MPT) cofactor (Moco or molybdenum cofactor) to form Mo-molybdopterin guanine dinucleotide (Mo-MGD) cofactor. The protein is Molybdenum cofactor guanylyltransferase of Cereibacter sphaeroides (strain ATCC 17023 / DSM 158 / JCM 6121 / CCUG 31486 / LMG 2827 / NBRC 12203 / NCIMB 8253 / ATH 2.4.1.) (Rhodobacter sphaeroides).